Here is a 66-residue protein sequence, read N- to C-terminus: Phylloseptin-S2 (66 aa).

A signal peptide spans 1–22 (MAFLKKSLFLVLFLGLVSLSIC). Residues 23 to 46 (EEEKRETEEEEHDQEEDDKSEEKR) constitute a propeptide that is removed on maturation. The tract at residues 25 to 44 (EKRETEEEEHDQEEDDKSEE) is disordered. Residues 30–41 (EEEEHDQEEDDK) show a composition bias toward acidic residues. Phe65 bears the Phenylalanine amide mark.

Expressed by the skin glands.

It localises to the secreted. Its subcellular location is the target cell membrane. Functionally, antimicrobial peptide with high activity against Gram-positive bacteria, moderate activity against Gram-negative bacteria, and moderate activity against fungi. Acts by causing bacterial membrane disruption inducing leakage of the intracellular content followed by cell death. It adopts an alpha-helical amphipathic structure in membrane environments. Also shows highly potent antiparasitic activity against Leishmania species. Shows moderate hemolytic activity on human erythrocytes (LC(50)=25 uM). Is also active on human monocytes (IC(50)=22.5 uM). The chain is Phylloseptin-S2 from Phyllomedusa sauvagei (Sauvage's leaf frog).